We begin with the raw amino-acid sequence, 550 residues long: Thioredoxin domain-containing protein 2 (550 aa).

The segment at 1-50 (MFKKNQKLSKDKGLEVNSVQAGAPEESDVKLNNGGKANERGSNEFLDTAQ) is disordered. 2 positions are modified to phosphoserine: S42 and S51. Residues 63–428 (MLHMSTEESE…IKSSEDVQPS (366 aa)) form a disordered region. Polar residues-rich tracts occupy residues 73–87 (PPQQVSSTSMFSENT), 96–105 (PKSSTKNTQL), and 112–140 (KTSSYSKQTNSSNIPKSLAITTYPKQGST). 22 repeat units span residues 104-118 (QLKQEDISKTSSYSK), 119-133 (QTNSSNIPKSLAITT), 134-148 (YPKQGSTLKPAANGT), 149-163 (HDREAEKPKSSEDLI), 164-178 (QSKKGDIFKPSEDSI), 179-193 (QSKKGDMPKSSEDPI), 194-208 (QSKKDDTAKSLEDTI), 209-223 (QSKNGDMPKSSEDPI), 224-238 (QSKKDDTARSLEDSI), 239-252 (QSKKGDMPKSSDTI), 253-267 (QSKESETPKFLQDTI), 268-282 (QSKGGKINKQVKDSM), 283-297 (KSKESKIRKPLKDSI), 298-312 (QSKENKIPKSSQDSA), 313-327 (QPKEGKIHKPLKDSL), 328-342 (PSKEGDISKPSEDTI), 343-357 (QAKEEITVSPEDTIQ), 358-384 (AKEEITMSPEDTIQAKEEITVSPEDTI), 385-399 (QAKEEITVSPEDTMQ), 400-412 (SKEEITVSPEDTV), 413-425 (QSQEGDIKSSEDV), and 426-440 (QPSENEIFPFEAEIE). The tract at residues 104-440 (QLKQEDISKT…EIFPFEAEIE (337 aa)) is 22 X 15 AA approximate tandem repeat of Q-P-K-X-G-D-I-P-K-S-[PS]-E-[KE]-X-I. 4 stretches are compositionally biased toward basic and acidic residues: residues 148–205 (THDR…KSLE), 217–259 (KSSE…ESET), 277–304 (QVKDSMKSKESKIRKPLKDSIQSKENKI), and 313–348 (QPKEGKIHKPLKDSLPSKEGDISKPSEDTIQAKEEI). At S158 the chain carries Phosphoserine. S351 and S379 each carry phosphoserine. The Thioredoxin domain occupies 401-550 (KEEITVSPED…KLEKSIAELK (150 aa)). A Phosphoserine modification is found at S407. An intrachain disulfide couples C477 to C480.

In terms of tissue distribution, testis-specific. Strongly expressed in the testicular seminiferous tubules, mostly in the round spermatids.

It localises to the cytoplasm. Functionally, probably plays a regulatory role in sperm development. May participate in regulation of fibrous sheath (FS) assembly by supporting the formation of disulfide bonds during sperm tail morphogenesis. May also be required to rectify incorrect disulfide pairing and generate suitable pairs between the FS constituents. Can reduce disulfide bonds in vitro in the presence of NADP and thioredoxin reductase. This is Thioredoxin domain-containing protein 2 (Txndc2) from Rattus norvegicus (Rat).